Reading from the N-terminus, the 427-residue chain is Pseudouridylate synthase 1 homolog (427 aa).

Residues 20–83 (GPRPSCSPRM…DEERREKPPK (64 aa)) form a disordered region. The segment covering 44–79 (QDRRSCSGRAGGDRVWEDGEHPAKKLKSGGDEERRE) has biased composition (basic and acidic residues). Asp-146 (nucleophile) is an active-site residue. A disordered region spans residues 407–427 (GGTGAKVPSPLEGSEGDGDTD). A phosphoserine mark is found at Ser-415 and Ser-420. The residue at position 426 (Thr-426) is a Phosphothreonine.

The protein belongs to the tRNA pseudouridine synthase TruA family. Monomer. Forms a complex with RARG and the SRA1 RNA in the nucleus. Widely expressed. High levels of expression found in brain and skeletal muscle.

The protein resides in the mitochondrion. It localises to the nucleus. Its subcellular location is the cytoplasm. The enzyme catalyses a uridine in tRNA = a pseudouridine in tRNA. The catalysed reaction is uridine(38/39/40) in tRNA = pseudouridine(38/39/40) in tRNA. It catalyses the reaction a uridine in mRNA = a pseudouridine in mRNA. Its function is as follows. Pseudouridylate synthase that catalyzes pseudouridylation of tRNAs and mRNAs. Acts on positions 27/28 in the anticodon stem and also positions 34 and 36 in the anticodon of an intron containing tRNA. Also catalyzes pseudouridylation of mRNAs: mediates pseudouridylation of mRNAs with the consensus sequence 5'-UGUAG-3'. Acts as a regulator of pre-mRNA splicing by mediating pseudouridylation of pre-mRNAs at locations associated with alternatively spliced regions. Pseudouridylation of pre-mRNAs near splice sites directly regulates mRNA splicing and mRNA 3'-end processing. Involved in regulation of nuclear receptor activity through pseudouridylation of SRA1 mRNA. This chain is Pseudouridylate synthase 1 homolog, found in Homo sapiens (Human).